The sequence spans 683 residues: Leucine zipper putative tumor suppressor 2 homolog (683 aa).

3 disordered regions span residues 1 to 37 (MAALQALPLSIDQNAEVSGSQSHTNTRSPVTENTMGS), 82 to 107 (YSSQDPLFNGLPTKKPSTTTSGNNGN), and 262 to 320 (MGHI…CDRS). Composition is skewed to polar residues over residues 11-37 (IDQNAEVSGSQSHTNTRSPVTENTMGS) and 96-107 (KPSTTTSGNNGN). Low complexity predominate over residues 290–308 (SDSGRSSSSKSTGSLSGRG). Positions 324–665 (SDEILIRELE…LELEARELDE (342 aa)) form a coiled coil.

Belongs to the LZTS2 family.

Its subcellular location is the cytoplasm. The protein resides in the cytoskeleton. The protein localises to the microtubule organizing center. It localises to the centrosome. Its function is as follows. Negative regulator of katanin-mediated microtubule severing and release from the centrosome. Required for central spindle formation and the completion of cytokinesis. Negative regulator of the Wnt signaling pathway. Represses beta-catenin-mediated transcriptional activation by promoting the nuclear exclusion of beta-catenin. This Xenopus tropicalis (Western clawed frog) protein is Leucine zipper putative tumor suppressor 2 homolog (lzts2).